The chain runs to 1037 residues: Glycine dehydrogenase (decarboxylating) A, mitochondrial (1037 aa).

A mitochondrion-targeting transit peptide spans Met1–Thr66. N6-(pyridoxal phosphate)lysine is present on Lys773.

The protein belongs to the GcvP family. Homodimer. The glycine cleavage system is composed of four proteins: P, T, L and H. Pyridoxal 5'-phosphate serves as cofactor. Expressed in leaves, stems and roots.

Its subcellular location is the mitochondrion. The enzyme catalyses N(6)-[(R)-lipoyl]-L-lysyl-[glycine-cleavage complex H protein] + glycine + H(+) = N(6)-[(R)-S(8)-aminomethyldihydrolipoyl]-L-lysyl-[glycine-cleavage complex H protein] + CO2. The glycine cleavage system catalyzes the degradation of glycine. The P protein binds the alpha-amino group of glycine through its pyridoxal phosphate cofactor; CO(2) is released and the remaining methylamine moiety is then transferred to the lipoamide cofactor of the H protein. The polypeptide is Glycine dehydrogenase (decarboxylating) A, mitochondrial (GDCSPA) (Flaveria pringlei).